The following is a 578-amino-acid chain: MSRSATKILIWFFKHNKGELLDVFNAISAPLSLPSKRELKLLWIKNEKFVRLTTTLVMLLLPRRFRRDTKRNLSKFVRKLCYDQKYVYAMKSVNYIVRSMVIPFSTTEHHLLFKICSLIIDRMKPTMLFSKRPKVTPFKLLFSLRGDRVKTLNMPSFERHSFVHKFLTPNKRLSGGLQNAIITNLWERAENEEEMSLVVNPSNNYVKRLAYLEELRHNMTLLGLSDSMLLLQDMADYLTGGKMKYDLDDRRGQPCPMMDVDLLTAFMSMNAATRSKFFSKTLEVSYPECTCFTKCMGAIAQHPVLVKQFENEFCLNNFSTRICGECRLSHVIDNTTSGKPRKSLSACNPGMSSCSMDACTVTLILRYLIHERVDERHGNLIKYGHRFYITNSSAVTDTVYRGNNITCSSATGRTGGVCFGGSRTCYKLIQNLVKSSKQYGLPRPFADRNYWWSCHTCQGKYGTHVNPRNSNQYNRDRHGFFSEEIHRNTCVDTFYQNVLRKVRKDMVDKDKEEEDEVIEVAVKHCYPKICRWCKSAIMCRHTMDGLVNMLVTSPKSRVLLNKVVILSLLQKLIKIEWT.

This is an uncharacterized protein from Ostreid herpesvirus 1 (isolate France) (OsHV-1).